The following is a 577-amino-acid chain: Arginine--tRNA ligase (577 aa).

A 'HIGH' region motif is present at residues Pro122–His132.

It belongs to the class-I aminoacyl-tRNA synthetase family. In terms of assembly, monomer.

The protein resides in the cytoplasm. It catalyses the reaction tRNA(Arg) + L-arginine + ATP = L-arginyl-tRNA(Arg) + AMP + diphosphate. This chain is Arginine--tRNA ligase, found in Haemophilus influenzae (strain PittEE).